The following is a 195-amino-acid chain: Putative lysine exporter (195 aa).

A run of 6 helical transmembrane segments spans residues 4 to 24 (LLSA…WLHF), 30 to 50 (LYVL…NGIS), 61 to 81 (LMMG…SAFF), 86 to 106 (ITQG…SVVL), 117 to 137 (IAFF…PLFM), and 170 to 190 (PIAI…LVFF).

This sequence belongs to the LysO family.

The protein resides in the cell inner membrane. Mediates export of lysine. This Haemophilus influenzae (strain ATCC 51907 / DSM 11121 / KW20 / Rd) protein is Putative lysine exporter.